Here is a 72-residue protein sequence, read N- to C-terminus: Large ribosomal subunit protein bL32c (72 aa).

The disordered stretch occupies residues 49 to 72 (PPAPVSENWDDEAKGFGKDLDAAE). Positions 59–72 (DEAKGFGKDLDAAE) are enriched in basic and acidic residues.

This sequence belongs to the bacterial ribosomal protein bL32 family.

It is found in the plastid. The protein resides in the chloroplast. The sequence is that of Large ribosomal subunit protein bL32c from Ostreococcus tauri.